The chain runs to 120 residues: Putative pterin-4-alpha-carbinolamine dehydratase (120 aa).

Belongs to the pterin-4-alpha-carbinolamine dehydratase family.

The catalysed reaction is (4aS,6R)-4a-hydroxy-L-erythro-5,6,7,8-tetrahydrobiopterin = (6R)-L-erythro-6,7-dihydrobiopterin + H2O. This chain is Putative pterin-4-alpha-carbinolamine dehydratase, found in Saccharomyces cerevisiae (strain ATCC 204508 / S288c) (Baker's yeast).